The following is a 338-amino-acid chain: Acetoin:2,6-dichlorophenolindophenol oxidoreductase subunit beta (338 aa).

As to quaternary structure, tetramer of 2 alpha and 2 beta subunits.

It functions in the pathway ketone degradation; acetoin degradation. Catalyzes the 2,6-dichlorophenolindophenol-dependent cleavage of acetoin into acetate and acetaldehyde, in vitro. The beta subunit is probably not the catalytic subunit of the enzyme. The sequence is that of Acetoin:2,6-dichlorophenolindophenol oxidoreductase subunit beta (acoB) from Cupriavidus necator (strain ATCC 17699 / DSM 428 / KCTC 22496 / NCIMB 10442 / H16 / Stanier 337) (Ralstonia eutropha).